Here is a 336-residue protein sequence, read N- to C-terminus: F420-dependent glucose-6-phosphate dehydrogenase (336 aa).

Aspartate 39 serves as a coordination point for coenzyme F420-(gamma-Glu)n. The Proton donor role is filled by histidine 40. Residues threonine 76 and 107-108 (TG) contribute to the coenzyme F420-(gamma-Glu)n site. Glutamate 109 serves as the catalytic Proton acceptor. Residues asparagine 112, 177–178 (GG), and 180–181 (QV) each bind coenzyme F420-(gamma-Glu)n. Residues threonine 195, lysine 198, lysine 259, and arginine 283 each coordinate substrate.

This sequence belongs to the F420-dependent glucose-6-phosphate dehydrogenase family. In terms of assembly, homodimer.

It catalyses the reaction oxidized coenzyme F420-(gamma-L-Glu)(n) + D-glucose 6-phosphate + H(+) = 6-phospho-D-glucono-1,5-lactone + reduced coenzyme F420-(gamma-L-Glu)(n). Catalyzes the coenzyme F420-dependent oxidation of glucose 6-phosphate (G6P) to 6-phosphogluconolactone. Appears to have a role in resistance to oxidative stress, via its consumption of G6P that serves as a source of reducing power to combat oxidative stress in mycobacteria. This chain is F420-dependent glucose-6-phosphate dehydrogenase, found in Mycolicibacterium gilvum (strain PYR-GCK) (Mycobacterium gilvum (strain PYR-GCK)).